The sequence spans 498 residues: Glycerol kinase (498 aa).

Thr12 contributes to the ADP binding site. ATP-binding residues include Thr12, Thr13, and Ser14. Thr12 serves as a coordination point for sn-glycerol 3-phosphate. Arg16 contributes to the ADP binding site. Sn-glycerol 3-phosphate contacts are provided by Arg82, Glu83, Tyr134, and Asp244. Glycerol contacts are provided by Arg82, Glu83, Tyr134, Asp244, and Gln245. Residues Thr266 and Gly310 each contribute to the ADP site. 4 residues coordinate ATP: Thr266, Gly310, Gln314, and Gly411. Residues Gly411 and Asn415 each coordinate ADP.

Belongs to the FGGY kinase family.

The catalysed reaction is glycerol + ATP = sn-glycerol 3-phosphate + ADP + H(+). The protein operates within polyol metabolism; glycerol degradation via glycerol kinase pathway; sn-glycerol 3-phosphate from glycerol: step 1/1. With respect to regulation, inhibited by fructose 1,6-bisphosphate (FBP). Key enzyme in the regulation of glycerol uptake and metabolism. Catalyzes the phosphorylation of glycerol to yield sn-glycerol 3-phosphate. The sequence is that of Glycerol kinase from Chloroflexus aurantiacus (strain ATCC 29366 / DSM 635 / J-10-fl).